The following is a 530-amino-acid chain: MFS transporter PfmaC (530 aa).

Residues 41–76 (TTAVSDGDNQSSTMSGKTAAGDATSPASGSGSGGWF) form a disordered region. Polar residues predominate over residues 42-56 (TAVSDGDNQSSTMSG). The segment covering 59 to 69 (AAGDATSPASG) has biased composition (low complexity). 10 helical membrane passes run 165–182 (YWLP…LGMY), 195–215 (FFIG…LGCW), 226–246 (ALFV…QAAL), 261–281 (WLFI…LFCF), 324–344 (IFTS…SLTV), 369–389 (NIPT…GFVS), 396–416 (GPVC…FTAW), 422–442 (LLMA…LLAG), 456–476 (AFIL…FQQL), and 493–513 (PSAL…IPLL).

It belongs to the major facilitator superfamily. Allantoate permease family.

It localises to the cell membrane. MFS transporter; part of the gene cluster that mediates the biosynthesis of dihydroxynaphthalene (DHN)-melanin, a bluish-green pigment forming a dark layer in the conidial wall that protects the conidia from UV radiations. The sequence is that of MFS transporter PfmaC from Pestalotiopsis fici (strain W106-1 / CGMCC3.15140).